A 252-amino-acid chain; its full sequence is Imidazole glycerol phosphate synthase subunit HisF (252 aa).

Residues Asp-11 and Asp-130 contribute to the active site.

Belongs to the HisA/HisF family. In terms of assembly, heterodimer of HisH and HisF.

It is found in the cytoplasm. The enzyme catalyses 5-[(5-phospho-1-deoxy-D-ribulos-1-ylimino)methylamino]-1-(5-phospho-beta-D-ribosyl)imidazole-4-carboxamide + L-glutamine = D-erythro-1-(imidazol-4-yl)glycerol 3-phosphate + 5-amino-1-(5-phospho-beta-D-ribosyl)imidazole-4-carboxamide + L-glutamate + H(+). It participates in amino-acid biosynthesis; L-histidine biosynthesis; L-histidine from 5-phospho-alpha-D-ribose 1-diphosphate: step 5/9. In terms of biological role, IGPS catalyzes the conversion of PRFAR and glutamine to IGP, AICAR and glutamate. The HisF subunit catalyzes the cyclization activity that produces IGP and AICAR from PRFAR using the ammonia provided by the HisH subunit. This chain is Imidazole glycerol phosphate synthase subunit HisF, found in Lacticaseibacillus paracasei (strain ATCC 334 / BCRC 17002 / CCUG 31169 / CIP 107868 / KCTC 3260 / NRRL B-441) (Lactobacillus paracasei).